A 498-amino-acid chain; its full sequence is Glycerol kinase (498 aa).

T12 serves as a coordination point for ADP. 3 residues coordinate ATP: T12, T13, and S14. T12 serves as a coordination point for sn-glycerol 3-phosphate. R16 lines the ADP pocket. R82, E83, Y134, and D244 together coordinate sn-glycerol 3-phosphate. Positions 82, 83, 134, 244, and 245 each coordinate glycerol. ADP is bound by residues T266 and G310. The ATP site is built by T266, G310, Q314, and G411. ADP is bound by residues G411 and N415.

This sequence belongs to the FGGY kinase family.

The catalysed reaction is glycerol + ATP = sn-glycerol 3-phosphate + ADP + H(+). It participates in polyol metabolism; glycerol degradation via glycerol kinase pathway; sn-glycerol 3-phosphate from glycerol: step 1/1. Inhibited by fructose 1,6-bisphosphate (FBP). Its function is as follows. Key enzyme in the regulation of glycerol uptake and metabolism. Catalyzes the phosphorylation of glycerol to yield sn-glycerol 3-phosphate. The chain is Glycerol kinase from Chloroflexus aurantiacus (strain ATCC 29364 / DSM 637 / Y-400-fl).